Reading from the N-terminus, the 138-residue chain is Cysteine desulfuration protein SufE (138 aa).

The Cysteine persulfide intermediate role is filled by Cys51.

Belongs to the SufE family. In terms of assembly, homodimer. Interacts with SufS.

It is found in the cytoplasm. The protein operates within cofactor biosynthesis; iron-sulfur cluster biosynthesis. In terms of biological role, participates in cysteine desulfuration mediated by SufS. Cysteine desulfuration mobilizes sulfur from L-cysteine to yield L-alanine and constitutes an essential step in sulfur metabolism for biosynthesis of a variety of sulfur-containing biomolecules. Functions as a sulfur acceptor for SufS, by mediating the direct transfer of the sulfur atom from the S-sulfanylcysteine of SufS, an intermediate product of cysteine desulfuration process. This chain is Cysteine desulfuration protein SufE, found in Salmonella arizonae (strain ATCC BAA-731 / CDC346-86 / RSK2980).